Consider the following 322-residue polypeptide: Ras-like protein 2 (322 aa).

Residues Gly20–Ala25, Val36–Thr42, Ala66–Gly67, and Asn123–Asp126 each bind GTP. Positions Tyr39 to Tyr47 match the Effector region motif. Lys131 participates in a covalent cross-link: Glycyl lysine isopeptide (Lys-Gly) (interchain with G-Cter in ubiquitin). A GTP-binding site is contributed by Ser153–Lys155. The segment at Tyr178 to Ser322 is disordered. Residues Lys180–Arg205 show a composition bias toward polar residues. Residues Ser198, Ser202, Ser207, Ser214, Ser235, and Ser238 each carry the phosphoserine modification. Positions Asn215–Thr252 are enriched in polar residues. A compositionally biased stretch (low complexity) spans Asn261–Asn284. Polar residues predominate over residues Ser285 to Lys294. Cys318 carries the S-palmitoyl cysteine lipid modification. A Cysteine methyl ester modification is found at Cys319. Residue Cys319 is the site of S-farnesyl cysteine attachment. A propeptide spans Ile320–Ser322 (removed in mature form).

It belongs to the small GTPase superfamily. Ras family. In terms of processing, farnesylated by RAM1-RAM2, which is required for targeting RAS2 to the cytoplasmic site of the endoplasmic reticulum, where proteolytic processing of the C-terminus by RCE1 and methylation of the resulting carboxyl group by STE14 occurs. Palmitoylated by the ERF2-SHR5 complex, which is required for proper plasma membrane localization of RAS2.

The protein resides in the cell membrane. It carries out the reaction GTP + H2O = GDP + phosphate + H(+). Its activity is regulated as follows. Alternates between an inactive form bound to GDP and an active form bound to GTP. Activated by guanine nucleotide-exchange factor (GEF) CDC25 and inactivated by GTPase-activating proteins (GAPs) IRA1 and IRA2. Functionally, the S.cerevisiae Ras proteins modulate the activity of the adenylate cyclase catalytic subunit and therefore affect the biosynthesis of cyclic-AMP. This is Ras-like protein 2 (RAS2) from Saccharomyces cerevisiae (strain ATCC 204508 / S288c) (Baker's yeast).